The following is a 49-amino-acid chain: Large ribosomal subunit protein bL33 (49 aa).

It belongs to the bacterial ribosomal protein bL33 family.

In Finegoldia magna (strain ATCC 29328 / DSM 20472 / WAL 2508) (Peptostreptococcus magnus), this protein is Large ribosomal subunit protein bL33.